A 161-amino-acid chain; its full sequence is Large ribosomal subunit protein uL15 (161 aa).

Residues 1 to 41 (MTKLNELAPAPGSTKGRMRVGRGPGSGKGKTAGRGVKGQKA) form a disordered region. Positions 22-36 (RGPGSGKGKTAGRGV) are enriched in gly residues.

This sequence belongs to the universal ribosomal protein uL15 family. Part of the 50S ribosomal subunit.

Its function is as follows. Binds to the 23S rRNA. This Caulobacter sp. (strain K31) protein is Large ribosomal subunit protein uL15.